The chain runs to 49 residues: uncharacterized protein (49 aa).

A helical membrane pass occupies residues 31–48; it reads PDLYTIIVSYFSIFSLFF.

Its subcellular location is the membrane. This is an uncharacterized protein from Saccharomyces cerevisiae (strain ATCC 204508 / S288c) (Baker's yeast).